We begin with the raw amino-acid sequence, 289 residues long: Energy-coupling factor transporter ATP-binding protein EcfA2 (289 aa).

The ABC transporter domain occupies 3-246 (IRFKQVDFTY…TQWLKEKQLG (244 aa)). 40-47 (GHTGSGKS) provides a ligand contact to ATP.

It belongs to the ABC transporter superfamily. Energy-coupling factor EcfA family. Forms a stable energy-coupling factor (ECF) transporter complex composed of 2 membrane-embedded substrate-binding proteins (S component), 2 ATP-binding proteins (A component) and 2 transmembrane proteins (T component).

The protein localises to the cell membrane. Functionally, ATP-binding (A) component of a common energy-coupling factor (ECF) ABC-transporter complex. Unlike classic ABC transporters this ECF transporter provides the energy necessary to transport a number of different substrates. The polypeptide is Energy-coupling factor transporter ATP-binding protein EcfA2 (Enterococcus faecalis (strain ATCC 700802 / V583)).